Consider the following 671-residue polypeptide: DEAD-box ATP-dependent RNA helicase 7 (671 aa).

The interval 1-84 (MPSLMLSDKK…EKKKSSKKVK (84 aa)) is disordered. Basic and acidic residues predominate over residues 26–41 (LDSKKGKKEQKLKLSD). Phosphoserine occurs at positions 40 and 42. Over residues 50–60 (KKSKKKDKKRK) the composition is skewed to basic residues. Residues 96–124 (NAVSKFRISAPLREKLKANGIEALFPIQA) carry the Q motif motif. The Helicase ATP-binding domain occupies 127-309 (FDMVLDGADL…NRFLKRDQKT (183 aa)). An ATP-binding site is contributed by 140 to 147 (ARTGQGKT). A DEAD box motif is present at residues 255–258 (DEAD). One can recognise a Helicase C-terminal domain in the interval 339-479 (LIPDIISCYS…HLAAPQPDEI (141 aa)). The interval 627-671 (EREPLPQKRFGGGGRGNRFGGGGGNRFGGGGGRGRGGSGGRGQRY) is disordered. Gly residues predominate over residues 636-671 (FGGGGRGNRFGGGGGNRFGGGGGRGRGGSGGRGQRY).

Belongs to the DEAD box helicase family. DDX21/DDX50 subfamily.

It localises to the nucleus. The enzyme catalyses ATP + H2O = ADP + phosphate + H(+). This Arabidopsis thaliana (Mouse-ear cress) protein is DEAD-box ATP-dependent RNA helicase 7 (RH7).